The following is a 162-amino-acid chain: Large ribosomal subunit protein uL15 (162 aa).

The segment at 1 to 44 (MKLNELRDNPGATKNRIRVGRGIGSGKGKTAGRGVKGQKSREGV) is disordered. Positions 21 to 35 (RGIGSGKGKTAGRGV) are enriched in gly residues.

Belongs to the universal ribosomal protein uL15 family. In terms of assembly, part of the 50S ribosomal subunit.

Binds to the 23S rRNA. The protein is Large ribosomal subunit protein uL15 of Rhodospirillum rubrum (strain ATCC 11170 / ATH 1.1.1 / DSM 467 / LMG 4362 / NCIMB 8255 / S1).